A 697-amino-acid chain; its full sequence is Phosphate acetyltransferase (697 aa).

The segment at 374–697 (LFLYNLVQAA…TVVITALQVK (324 aa)) is phosphate acetyltransferase.

The protein in the N-terminal section; belongs to the CobB/CobQ family. It in the C-terminal section; belongs to the phosphate acetyltransferase and butyryltransferase family.

It is found in the cytoplasm. The catalysed reaction is acetyl-CoA + phosphate = acetyl phosphate + CoA. Its pathway is metabolic intermediate biosynthesis; acetyl-CoA biosynthesis; acetyl-CoA from acetate: step 2/2. Its function is as follows. Involved in acetate metabolism. The sequence is that of Phosphate acetyltransferase (pta) from Synechocystis sp. (strain ATCC 27184 / PCC 6803 / Kazusa).